We begin with the raw amino-acid sequence, 839 residues long: Homeobox-leucine zipper protein HOX10 (839 aa).

2 disordered regions span residues 1–24 and 132–157; these read MAAA…SGMD and QNTP…RDAS. A DNA-binding region (homeobox) is located at residues 24–87; it reads DSGKYVRYTP…NRRCRDKQRK (64 aa). Residues 91-134 are a coiled coil; sequence RLQAVNRKLTAMNKLLMEENERLQKQVSQLVHENAHMRQQLQNT. Residues 155–383 form the START domain; the sequence is DASNPSGLLS…IAQETSGEVV (229 aa).

It belongs to the HD-ZIP homeobox family. Class III subfamily. As to expression, expressed in stems, leaf sheaths and blades and panicles.

The protein resides in the nucleus. Probable transcription factor. The sequence is that of Homeobox-leucine zipper protein HOX10 (HOX10) from Oryza sativa subsp. japonica (Rice).